A 66-amino-acid polypeptide reads, in one-letter code: Cold shock-like protein (66 aa).

The CSD domain occupies 3–62 (GKVKWFDSKKGYGFITKDEGGDVFVHWSAIEMEGFKTLKEGQVVEFEIQEGKKGPQAAHV).

As to quaternary structure, monomer.

The protein resides in the cytoplasm. This chain is Cold shock-like protein (csp), found in Thermotoga maritima (strain ATCC 43589 / DSM 3109 / JCM 10099 / NBRC 100826 / MSB8).